The primary structure comprises 107 residues: Small ribosomal subunit protein bS18 (107 aa).

This sequence belongs to the bacterial ribosomal protein bS18 family. Part of the 30S ribosomal subunit. Forms a tight heterodimer with protein bS6.

Its function is as follows. Binds as a heterodimer with protein bS6 to the central domain of the 16S rRNA, where it helps stabilize the platform of the 30S subunit. The sequence is that of Small ribosomal subunit protein bS18 from Mycoplasmopsis agalactiae (strain NCTC 10123 / CIP 59.7 / PG2) (Mycoplasma agalactiae).